The chain runs to 285 residues: MNLIDGKALAAKMQAELKVKVDKLKEAGSVPGLAVILVGEDPASQIYVRNKARQATAIGLNSSVVRLPETVSEKELLELIEQYNQSEQWHGILVQLPLPKHISEEKVLLAIDPEKDVDGFHPMNMGRLWAGNPLMIPSTPAGIMEMFREYNVELSGKRAVVIGRSNIVGKPMAQLLMMADATVTIAHSRTKNLRELTKEADILVVAIGRDRMIKADDVKDGAVVIDVGMNRDEDGKLHGDVDFDEVKEVASLITPVPGGVGPMTITMLMEQTVRAATRKMNENSN.

NADP(+) is bound by residues 163 to 165 and S188; that span reads GRS.

Belongs to the tetrahydrofolate dehydrogenase/cyclohydrolase family. In terms of assembly, homodimer.

The catalysed reaction is (6R)-5,10-methylene-5,6,7,8-tetrahydrofolate + NADP(+) = (6R)-5,10-methenyltetrahydrofolate + NADPH. It carries out the reaction (6R)-5,10-methenyltetrahydrofolate + H2O = (6R)-10-formyltetrahydrofolate + H(+). It functions in the pathway one-carbon metabolism; tetrahydrofolate interconversion. In terms of biological role, catalyzes the oxidation of 5,10-methylenetetrahydrofolate to 5,10-methenyltetrahydrofolate and then the hydrolysis of 5,10-methenyltetrahydrofolate to 10-formyltetrahydrofolate. The polypeptide is Bifunctional protein FolD (Lactococcus lactis subsp. cremoris (strain MG1363)).